Consider the following 638-residue polypeptide: 9-cis-epoxycarotenoid dioxygenase NCED1, chloroplastic (638 aa).

The transit peptide at M1–V80 directs the protein to the chloroplast. Composition is skewed to low complexity over residues A28–S37, A44–P69, and T92–S102. Disordered regions lie at residues A28–V80 and T92–A113. Fe cation contacts are provided by H331, H380, H446, and H624.

The protein belongs to the carotenoid oxygenase family. The cofactor is Fe(2+).

The protein resides in the plastid. Its subcellular location is the chloroplast. It catalyses the reaction a 9-cis-epoxycarotenoid + O2 = a 12'-apo-carotenal + 2-cis,4-trans-xanthoxin. The enzyme catalyses 9-cis-violaxanthin + O2 = (3S,5R,6S)-5,6-epoxy-3-hydroxy-5,6-dihydro-12'-apo-beta-caroten-12'-al + 2-cis,4-trans-xanthoxin. It carries out the reaction 9'-cis-neoxanthin + O2 = (3S,5R,6R)-3,5-dihydroxy-6,7-didehydro-5,6-dihydro-12'-apo-beta-caroten-12'-al + 2-cis,4-trans-xanthoxin. Its function is as follows. Has a 11,12(11',12') 9-cis epoxycarotenoid cleavage activity. Catalyzes the first step of abscisic-acid biosynthesis from carotenoids. This Oryza sativa subsp. japonica (Rice) protein is 9-cis-epoxycarotenoid dioxygenase NCED1, chloroplastic.